An 81-amino-acid chain; its full sequence is Defensin-like protein 130 (81 aa).

Residues 1 to 21 form the signal peptide; sequence MTKNTSLTIFMVVLVIGMLYT. 4 cysteine pairs are disulfide-bonded: C32–C81, C41–C63, C46–C75, and C50–C77.

The protein belongs to the DEFL family.

It localises to the secreted. The polypeptide is Defensin-like protein 130 (LCR28) (Arabidopsis thaliana (Mouse-ear cress)).